We begin with the raw amino-acid sequence, 81 residues long: Putative membrane protein insertion efficiency factor (81 aa).

It belongs to the UPF0161 family.

It localises to the cell inner membrane. Its function is as follows. Could be involved in insertion of integral membrane proteins into the membrane. The chain is Putative membrane protein insertion efficiency factor from Pseudomonas savastanoi pv. phaseolicola (strain 1448A / Race 6) (Pseudomonas syringae pv. phaseolicola (strain 1448A / Race 6)).